The chain runs to 268 residues: Aliphatic sulfonates import ATP-binding protein SsuB 3 (268 aa).

The segment at 1–27 (MTAAEAPLPPLAPRERTATTAAERRTG) is disordered. Residues 13–26 (PRERTATTAAERRT) show a composition bias toward basic and acidic residues. In terms of domain architecture, ABC transporter spans 32–247 (VSLSGVRKSF…DRNDPEALRY (216 aa)). 64–71 (GPSGTGKT) contacts ATP.

The protein belongs to the ABC transporter superfamily. Aliphatic sulfonates importer (TC 3.A.1.17.2) family. In terms of assembly, the complex is composed of two ATP-binding proteins (SsuB), two transmembrane proteins (SsuC) and a solute-binding protein (SsuA).

It is found in the cell membrane. The enzyme catalyses ATP + H2O + aliphatic sulfonate-[sulfonate-binding protein]Side 1 = ADP + phosphate + aliphatic sulfonateSide 2 + [sulfonate-binding protein]Side 1.. Its function is as follows. Part of the ABC transporter complex SsuABC involved in aliphatic sulfonates import. Responsible for energy coupling to the transport system. The chain is Aliphatic sulfonates import ATP-binding protein SsuB 3 from Rhodococcus jostii (strain RHA1).